We begin with the raw amino-acid sequence, 224 residues long: PHD finger-containing protein 5 (224 aa).

The PHD-type zinc-finger motif lies at 31 to 81 (KKPCEVCGSDANELLMMTCFMCRDTREHTYCARVMFQRVPRLWICEECRDF). Zn(2+)-binding residues include cysteine 34, cysteine 37, cysteine 49, cysteine 52, histidine 58, cysteine 61, cysteine 75, and cysteine 78. The interval 116 to 137 (PRTNQVVDNHQDPPIDQTDPSS) is disordered.

Interacts directly with AIPP3/BDT1.

Its function is as follows. Together with AIPP3/BDT1, cooperates to form a BAH-PHD bivalent histone reader complex able to read histone H3 lysine 27 trimethylation (H3K27me3) histone marks in order to regulate transcription, especially to prevent early flowering; promotes AIPP3/BDT1 binding to H3K27me3. The protein is PHD finger-containing protein 5 of Arabidopsis thaliana (Mouse-ear cress).